Here is a 234-residue protein sequence, read N- to C-terminus: Interleukin-34 (234 aa).

Positions 1–20 are cleaved as a signal peptide; sequence MPWGLAWLYCLGILLDVALG. An N-linked (GlcNAc...) asparagine glycan is attached at N99. A disordered region spans residues 215-234; the sequence is PRQPPTSLPRSPSSNHGPLP. The span at 222–234 shows a compositional bias: polar residues; that stretch reads LPRSPSSNHGPLP.

This sequence belongs to the IL-34 family. As to quaternary structure, homodimer. Interacts with CSF1R.

It localises to the secreted. Its function is as follows. Cytokine that promotes the proliferation, survival and differentiation of monocytes and macrophages. Promotes the release of pro-inflammatory chemokines, and thereby plays an important role in innate immunity and in inflammatory processes. Plays an important role in the regulation of osteoclast proliferation and differentiation, and in the regulation of bone resorption. Signaling via CSF1R and its downstream effectors stimulates phosphorylation of MAPK1/ERK2 AND MAPK3/ERK1. The polypeptide is Interleukin-34 (Il34) (Rattus norvegicus (Rat)).